The primary structure comprises 102 residues: UV-induced protein uvi31 (102 aa).

It belongs to the BolA/IbaG family.

The protein localises to the mitochondrion matrix. It is found in the cytoplasm. Its subcellular location is the nucleus. Its function is as follows. Acts as a mitochondrial iron-sulfur (Fe-S) cluster assembly factor that facilitates [4Fe-4S] cluster insertion into a subset of mitochondrial proteins such as lipoyl synthase (LS) and succinate dehydrogenase (SDH). Required during the last step of iron-sulfur protein assembly when the iron-sulfur cluster is inserted into the target protein. Probably acts together with the monothiol glutaredoxin grx5. Not required for [2Fe-2S] cluster insertion into mitochondrial proteins. May be involved in control of cell division, especially during the resumption from cell cycle arrest. This chain is UV-induced protein uvi31, found in Schizosaccharomyces pombe (strain 972 / ATCC 24843) (Fission yeast).